The sequence spans 196 residues: Glycerol-3-phosphate acyltransferase (196 aa).

5 helical membrane-spanning segments follow: residues 4–24 (FYIM…VVLT), 53–73 (LGVL…LIAI), 78–98 (LGDA…CYPV), 114–134 (IFLV…ALLV), and 140–160 (VSLG…FTEG).

Belongs to the PlsY family. Probably interacts with PlsX.

Its subcellular location is the cell inner membrane. The catalysed reaction is an acyl phosphate + sn-glycerol 3-phosphate = a 1-acyl-sn-glycero-3-phosphate + phosphate. The protein operates within lipid metabolism; phospholipid metabolism. In terms of biological role, catalyzes the transfer of an acyl group from acyl-phosphate (acyl-PO(4)) to glycerol-3-phosphate (G3P) to form lysophosphatidic acid (LPA). This enzyme utilizes acyl-phosphate as fatty acyl donor, but not acyl-CoA or acyl-ACP. The protein is Glycerol-3-phosphate acyltransferase of Syntrophotalea carbinolica (strain DSM 2380 / NBRC 103641 / GraBd1) (Pelobacter carbinolicus).